Reading from the N-terminus, the 1021-residue chain is Caspase recruitment domain-containing protein 10 (1021 aa).

The interval 1 to 24 (MQGRADAGEADEEAGAGSGSEAEE) is disordered. Ser18 is subject to Phosphoserine. The CARD domain occupies 23–115 (EEDALWERIE…EHFTLLTGQE (93 aa)). Positions 138–450 (TEVRRLREAR…LEAQLQRTQG (313 aa)) form a coiled coil. Disordered regions lie at residues 475–544 (EFPS…MSDI), 597–616 (SPPA…PGLG), and 790–809 (LVRP…QLPA). Composition is skewed to basic and acidic residues over residues 495–508 (HTSE…KEIN) and 525–535 (RQREEDPEPPK).

As to quaternary structure, CARD10 and BCL10 bind to each other by CARD-CARD interaction. They both participate in a complex with MALT1, where MALT1 binds to BCL10. Interacts with TMEM43; this interaction is essential for EGFR-mediated NF-kappa-B activation. Highly expressed in kidney, heart followed by brain, lung, liver, skeletal muscle and testis.

In terms of biological role, scaffold protein that plays an important role in mediating the activation of NF-kappa-B via BCL10 or EGFR. This is Caspase recruitment domain-containing protein 10 (Card10) from Mus musculus (Mouse).